The following is a 141-amino-acid chain: Large ribosomal subunit protein uL11 (141 aa).

The protein belongs to the universal ribosomal protein uL11 family. In terms of assembly, part of the ribosomal stalk of the 50S ribosomal subunit. Interacts with L10 and the large rRNA to form the base of the stalk. L10 forms an elongated spine to which L12 dimers bind in a sequential fashion forming a multimeric L10(L12)X complex. Post-translationally, one or more lysine residues are methylated.

Its function is as follows. Forms part of the ribosomal stalk which helps the ribosome interact with GTP-bound translation factors. In Thermosipho africanus (strain TCF52B), this protein is Large ribosomal subunit protein uL11.